The primary structure comprises 363 residues: Ribosomal RNA large subunit methyltransferase M (363 aa).

Residues serine 190, 223 to 226 (CPGG), aspartate 242, aspartate 262, and aspartate 280 contribute to the S-adenosyl-L-methionine site. The active-site Proton acceptor is lysine 309.

It belongs to the class I-like SAM-binding methyltransferase superfamily. RNA methyltransferase RlmE family. RlmM subfamily. In terms of assembly, monomer.

It localises to the cytoplasm. The catalysed reaction is cytidine(2498) in 23S rRNA + S-adenosyl-L-methionine = 2'-O-methylcytidine(2498) in 23S rRNA + S-adenosyl-L-homocysteine + H(+). In terms of biological role, catalyzes the 2'-O-methylation at nucleotide C2498 in 23S rRNA. This chain is Ribosomal RNA large subunit methyltransferase M, found in Actinobacillus pleuropneumoniae serotype 5b (strain L20).